Consider the following 353-residue polypeptide: Ferredoxin--NADP reductase (353 aa).

Residues D33, Q41, Y46, V86, F121, D293, and T333 each coordinate FAD.

This sequence belongs to the ferredoxin--NADP reductase type 2 family. As to quaternary structure, homodimer. It depends on FAD as a cofactor.

The enzyme catalyses 2 reduced [2Fe-2S]-[ferredoxin] + NADP(+) + H(+) = 2 oxidized [2Fe-2S]-[ferredoxin] + NADPH. The chain is Ferredoxin--NADP reductase from Verminephrobacter eiseniae (strain EF01-2).